The sequence spans 1239 residues: Anion exchange protein 2 (1239 aa).

The tract at residues 1–237 (MSSAPRRPAK…HRSYNLQERR (237 aa)) is disordered. The Cytoplasmic portion of the chain corresponds to 1–706 (MSSAPRRPAK…DFRDALDPQC (706 aa)). Basic and acidic residues-rich tracts occupy residues 37–49 (ELHR…RFEE) and 58–75 (GGEE…EYHR). 2 stretches are compositionally biased toward basic residues: residues 76-85 (QSSHHIHHPL) and 94-110 (RRRK…RRRP). Residues S113, S132, S144, S170, and S172 each carry the phosphoserine modification. Residues 120-133 (TIEEGEEDEDEASE) are compositionally biased toward acidic residues. The segment covering 141 to 155 (TQPSPVSTPSSVQFF) has biased composition (low complexity). Over residues 189–207 (GAQAGTQVEEAEAVAVASG) the composition is skewed to low complexity. The span at 208–217 (TAGGDDGGAS) shows a compositional bias: gly residues. The residue at position 241 (S241) is a Phosphoserine. At T255 the chain carries Phosphothreonine. Position 272 is an N6-methyllysine (K272). A disordered region spans residues 285–318 (HLVRKNAKGSTQSGREGREPGPTPRARPRAPHKP). S441 is modified (phosphoserine). Residues 447–468 (SLLGHHHGQGAESDPHVTEPLI) are disordered. Membrane (anion exchange) regions lie at residues 706–1239 (CLAA…PMPV) and 708–1239 (AAVI…PMPV). 4 helical membrane passes run 707 to 727 (LAAV…FGGL), 752 to 772 (FCLL…LLVF), 794 to 814 (IGFW…SFLV), and 824 to 844 (IFAF…LVKI). The Extracellular segment spans residues 845–895 (FQEHPLHGCSASNSSEVDGGENMTWAVARPTLGPGNRSLAGQSGQGKPRGQ). N857, N866, and N880 each carry an N-linked (GlcNAc...) asparagine glycan. A helical membrane pass occupies residues 896–916 (PNTALLSLVLMAGTFFIAFFL). The Cytoplasmic segment spans residues 917-931 (RKFKNSRFFPGRIRR). The next 5 membrane-spanning stretches (helical) occupy residues 932 to 952 (VIGD…DYSI), 987 to 1007 (FPVW…ILIF), 1034 to 1054 (LLLI…WLAA), 1088 to 1108 (RVTG…GDLL), and 1111 to 1131 (IPLA…LNGI). A lipid anchor (S-palmitoyl cysteine) is attached at C1171. The helical transmembrane segment at 1172 to 1192 (LALLWAVMSTAASLAFPFILI) threads the bilayer.

It belongs to the anion exchanger (TC 2.A.31) family.

Its subcellular location is the apical cell membrane. The protein localises to the basolateral cell membrane. It carries out the reaction hydrogencarbonate(in) + chloride(out) = hydrogencarbonate(out) + chloride(in). In terms of biological role, sodium-independent anion exchanger which mediates the electroneutral exchange of chloride for bicarbonate ions across the cell membrane. Plays an important role in osteoclast differentiation and function. Regulates bone resorption and calpain-dependent actin cytoskeleton organization in osteoclasts via anion exchange-dependent control of pH. Essential for intracellular pH regulation in CD8(+) T-cells upon CD3 stimulation, modulating CD8(+) T-cell response. The sequence is that of Anion exchange protein 2 (SLC4A2) from Pongo abelii (Sumatran orangutan).